The primary structure comprises 228 residues: Probable septum site-determining protein MinC (228 aa).

It belongs to the MinC family. Interacts with MinD and FtsZ.

Its function is as follows. Cell division inhibitor that blocks the formation of polar Z ring septums. Rapidly oscillates between the poles of the cell to destabilize FtsZ filaments that have formed before they mature into polar Z rings. Prevents FtsZ polymerization. This chain is Probable septum site-determining protein MinC, found in Bacillus cereus (strain G9842).